The following is a 261-amino-acid chain: Acyl-[acyl-carrier-protein]--UDP-N-acetylglucosamine O-acyltransferase (261 aa).

It belongs to the transferase hexapeptide repeat family. LpxA subfamily. As to quaternary structure, homotrimer.

Its subcellular location is the cytoplasm. It catalyses the reaction a (3R)-hydroxyacyl-[ACP] + UDP-N-acetyl-alpha-D-glucosamine = a UDP-3-O-[(3R)-3-hydroxyacyl]-N-acetyl-alpha-D-glucosamine + holo-[ACP]. It functions in the pathway glycolipid biosynthesis; lipid IV(A) biosynthesis; lipid IV(A) from (3R)-3-hydroxytetradecanoyl-[acyl-carrier-protein] and UDP-N-acetyl-alpha-D-glucosamine: step 1/6. In terms of biological role, involved in the biosynthesis of lipid A, a phosphorylated glycolipid that anchors the lipopolysaccharide to the outer membrane of the cell. This chain is Acyl-[acyl-carrier-protein]--UDP-N-acetylglucosamine O-acyltransferase, found in Sulfurimonas denitrificans (strain ATCC 33889 / DSM 1251) (Thiomicrospira denitrificans (strain ATCC 33889 / DSM 1251)).